We begin with the raw amino-acid sequence, 349 residues long: tRNA N6-adenosine threonylcarbamoyltransferase (349 aa).

Fe cation is bound by residues H111 and H115. Substrate-binding positions include 134-138 (LVSGG), D167, G180, D184, and N279. D307 is a Fe cation binding site.

It belongs to the KAE1 / TsaD family. The cofactor is Fe(2+).

The protein localises to the cytoplasm. It catalyses the reaction L-threonylcarbamoyladenylate + adenosine(37) in tRNA = N(6)-L-threonylcarbamoyladenosine(37) in tRNA + AMP + H(+). Required for the formation of a threonylcarbamoyl group on adenosine at position 37 (t(6)A37) in tRNAs that read codons beginning with adenine. Is involved in the transfer of the threonylcarbamoyl moiety of threonylcarbamoyl-AMP (TC-AMP) to the N6 group of A37, together with TsaE and TsaB. TsaD likely plays a direct catalytic role in this reaction. The protein is tRNA N6-adenosine threonylcarbamoyltransferase of Nostoc punctiforme (strain ATCC 29133 / PCC 73102).